Here is a 363-residue protein sequence, read N- to C-terminus: MHLSDFYFDLPDELIARYPKPERSSSRLLRLSGENGDISHHTFSDVYDLINEGDLLIFNNTRVIPARMYGRKASGGKIEVLIERVLTESRFLAHVRSSKAPKAGTELILGEDKLGEGKGVKAVMIGRQDALFELEITEKSTALLDILQKIGHMPLPPYIDRPDEDADQERYQTVYSKIPGAVAAPTAGLHFDEELLAKLKAKGVNFAFVTLHVGAGTFQPVRVNNIEEHHMHAEYVEVPQQVVDAIVATKAAGKRVIAVGTTSVRSVESAALAAQEKGFAQIIEPFFADTSIFIYPGKQFRVVDCLITNFHLPESTLIMLVSAFAGYKNTMNAYKSAVENRYRFFSYGDAMFITKNNHVKGLD.

This sequence belongs to the QueA family. In terms of assembly, monomer.

The protein localises to the cytoplasm. It catalyses the reaction 7-aminomethyl-7-carbaguanosine(34) in tRNA + S-adenosyl-L-methionine = epoxyqueuosine(34) in tRNA + adenine + L-methionine + 2 H(+). It functions in the pathway tRNA modification; tRNA-queuosine biosynthesis. In terms of biological role, transfers and isomerizes the ribose moiety from AdoMet to the 7-aminomethyl group of 7-deazaguanine (preQ1-tRNA) to give epoxyqueuosine (oQ-tRNA). This Mannheimia succiniciproducens (strain KCTC 0769BP / MBEL55E) protein is S-adenosylmethionine:tRNA ribosyltransferase-isomerase.